A 176-amino-acid chain; its full sequence is Japanin (176 aa).

Residues 1 to 24 (MKVLRCLVCSFYIIVSLITTMTIG) form the signal peptide. Glutamate 47 contributes to the cholesterol binding site. 2 cysteine pairs are disulfide-bonded: cysteine 52–cysteine 174 and cysteine 138–cysteine 162. Residues asparagine 59 and asparagine 155 are each glycosylated (N-linked (GlcNAc...) asparagine).

It belongs to the calycin superfamily. Lipocalin family. As to quaternary structure, homodimer; non-disulfide-linked. Each monomer accommodates one molecule of cholesterol in a pocket. Expressed in salivary glands.

It localises to the secreted. Salivary tick protein that modulates host immune response. This protein blocks dendritic cell (DC) differentiation from monocytes. In addition, it inhibits up-regulation of costimulatory molecules and pro-inflammatory cytokines in response to stimuli and promotes up-regulation of co-inhibitory molecules and the anti-inflammatory cytokine interleukin-10. It has a pocket to accomodate cholesterol, which may have immune-modulatory roles, either directly or through interactions with the host gut microbiota. The chain is Japanin from Rhipicephalus appendiculatus (Brown ear tick).